The chain runs to 516 residues: MRSVTKYYLHGVVLFATGCAGNPDAKRLYDDLLSNYNKLVRPVLNVSDALTVRIKLKLSQLIDVNLKNQIMTTNLWVEQSWYDYKLSWEPREYGGVEMLHVPSDHIWRPDIVLYNNADGNFEVTLATKATLNYTGRVEWRPPAIYKSSCEIDVEYFPFDQQTCVMKFGSWTYDGFQVDLRHIDEVRGTNVVELGVDLSEFYTSVEWDILEVPAVRNEKFYTCCDEPYLDITFNITMRRKTLFYTVNLIIPCMGISFLTVLVFYLPSDSGEKVSLSISILLSLTVFFLLLAEIIPPTSLVVPLLGKFVLFTMILDTFSICVTVVVLNVHFRSPQTHTMSPWVRRVFIHVLPRLLVMRRPHYRLDPHRSRFAGLVTGAGETTLWDEGSPGVPAPPRPPPCAPPLAPCAACAPAEAPALCDALRRWHRCPELHKAIDGINYIADQTRKEEESTRVKEDWKYVAMVLDRPFLWIFTLAVVVGSAGIILQAPTLYDERAPIDVRLSEIAYTAAKPRPPPPR.

The first 21 residues, 1 to 21 (MRSVTKYYLHGVVLFATGCAG), serve as a signal peptide directing secretion. Residues 22–243 (NPDAKRLYDD…ITMRRKTLFY (222 aa)) are Extracellular-facing. N-linked (GlcNAc...) asparagine glycosylation is found at N45 and N132. Cystine bridges form between C149–C163 and C222–C223. The N-linked (GlcNAc...) asparagine glycan is linked to N233. Transmembrane regions (helical) follow at residues 244–264 (TVNL…VFYL), 274–294 (LSIS…EIIP), and 306–326 (FVLF…VVLN). Residues 327-465 (VHFRSPQTHT…WKYVAMVLDR (139 aa)) are Cytoplasmic-facing. A helical transmembrane segment spans residues 466-486 (PFLWIFTLAVVVGSAGIILQA).

The protein belongs to the ligand-gated ion channel (TC 1.A.9) family. Acetylcholine receptor (TC 1.A.9.1) subfamily.

The protein localises to the postsynaptic cell membrane. It is found in the cell membrane. In terms of biological role, after binding acetylcholine, the AChR responds by an extensive change in conformation that affects all subunits and leads to opening of an ion-conducting channel across the plasma membrane. This chain is Acetylcholine receptor subunit alpha-like (ARA1), found in Manduca sexta (Tobacco hawkmoth).